We begin with the raw amino-acid sequence, 274 residues long: Ribosomal RNA small subunit methyltransferase A (274 aa).

6 residues coordinate S-adenosyl-L-methionine: histidine 15, leucine 17, glycine 42, glutamate 64, aspartate 89, and asparagine 109.

The protein belongs to the class I-like SAM-binding methyltransferase superfamily. rRNA adenine N(6)-methyltransferase family. RsmA subfamily.

It is found in the cytoplasm. It carries out the reaction adenosine(1518)/adenosine(1519) in 16S rRNA + 4 S-adenosyl-L-methionine = N(6)-dimethyladenosine(1518)/N(6)-dimethyladenosine(1519) in 16S rRNA + 4 S-adenosyl-L-homocysteine + 4 H(+). In terms of biological role, specifically dimethylates two adjacent adenosines (A1518 and A1519) in the loop of a conserved hairpin near the 3'-end of 16S rRNA in the 30S particle. May play a critical role in biogenesis of 30S subunits. This chain is Ribosomal RNA small subunit methyltransferase A, found in Synechococcus sp. (strain RCC307).